Consider the following 405-residue polypeptide: 3-hydroxy-3-methylglutaryl-coenzyme A reductase (405 aa).

Residues E101 and D305 each act as charge relay system in the active site. H400 (proton donor) is an active-site residue.

This sequence belongs to the HMG-CoA reductase family. Homodimer.

It localises to the cytoplasm. The catalysed reaction is (R)-mevalonate + 2 NADP(+) + CoA = (3S)-3-hydroxy-3-methylglutaryl-CoA + 2 NADPH + 2 H(+). It functions in the pathway metabolic intermediate biosynthesis; (R)-mevalonate biosynthesis; (R)-mevalonate from acetyl-CoA: step 3/3. Is competitively inhibited by lovastatin (formerly called mevinolin). Lovastatin also blocks the growth of H.salinarum, and this effect is reversed by addition of mevalonate, indicating the critical role that the mevalonate pathway plays in isoprenoid biosynthesis by these archaea. Catalyzes the NADPH-dependent reductive deacylation of (S)-3-hydroxy-3-methylglutaryl-CoA (HMG-CoA) to (R)-mevalonate. Cannot use NADH instead of NADPH. Functions in the mevalonate (MVA) pathway leading to isopentenyl diphosphate (IPP), a key precursor for the biosynthesis of isoprenoid compounds such as archaeal membrane lipids. The sequence is that of 3-hydroxy-3-methylglutaryl-coenzyme A reductase (hmgA) from Halobacterium salinarum (strain ATCC 29341 / DSM 671 / R1).